We begin with the raw amino-acid sequence, 545 residues long: Protein FAR1-RELATED SEQUENCE 9 (545 aa).

The 44-residue stretch at 22-65 (LNYLKRRQLENPGFLYAIEDDCGNVFWADPTCRLNYTYFGDTLV) folds into the FAR1 domain. One can recognise an MULE domain in the interval 66–150 (FDTTYRRGKR…RVFSQTRLRF (85 aa)). The SWIM-type zinc finger occupies 345 to 381 (HTVSFDSLEVKANCSCQMFEYSGIICRHILAVFSAKN). Residues 460-495 (SNRTPGTRLPNGEAYPSEEARETANATNHPGGEKER) form a disordered region. Positions 492-545 (EKERTILELTAELERTGQRCEVYRANLLSILRDMEEQKFQLSLKVQNARLSLKE) form a coiled coil.

This sequence belongs to the FHY3/FAR1 family. In terms of tissue distribution, expressed in hypocotyls, rosette and cauline leaves, inflorescences stems, flowers and siliques.

The protein localises to the nucleus. Its function is as follows. Putative transcription activator involved in regulating light control of development. May act as a negative regulator specific to phyB signaling. In Arabidopsis thaliana (Mouse-ear cress), this protein is Protein FAR1-RELATED SEQUENCE 9 (FRS9).